Consider the following 93-residue polypeptide: Large ribosomal subunit protein uL23 (93 aa).

The protein belongs to the universal ribosomal protein uL23 family. In terms of assembly, part of the 50S ribosomal subunit. Contacts protein L29, and trigger factor when it is bound to the ribosome.

One of the early assembly proteins it binds 23S rRNA. One of the proteins that surrounds the polypeptide exit tunnel on the outside of the ribosome. Forms the main docking site for trigger factor binding to the ribosome. The polypeptide is Large ribosomal subunit protein uL23 (Nitratiruptor sp. (strain SB155-2)).